A 390-amino-acid polypeptide reads, in one-letter code: Alkanesulfonate monooxygenase 1 (390 aa).

Residues T364 to S390 are disordered.

The protein belongs to the SsuD family.

It carries out the reaction an alkanesulfonate + FMNH2 + O2 = an aldehyde + FMN + sulfite + H2O + 2 H(+). Catalyzes the desulfonation of aliphatic sulfonates. The polypeptide is Alkanesulfonate monooxygenase 1 (ssuD1) (Mesorhizobium japonicum (strain LMG 29417 / CECT 9101 / MAFF 303099) (Mesorhizobium loti (strain MAFF 303099))).